We begin with the raw amino-acid sequence, 360 residues long: Phosphoserine aminotransferase (360 aa).

R42 serves as a coordination point for L-glutamate. Pyridoxal 5'-phosphate is bound by residues W102, T152, D171, and Q194. K195 is subject to N6-(pyridoxal phosphate)lysine. Pyridoxal 5'-phosphate is bound at residue N237 to T238.

It belongs to the class-V pyridoxal-phosphate-dependent aminotransferase family. SerC subfamily. Homodimer. Pyridoxal 5'-phosphate serves as cofactor.

It is found in the cytoplasm. The enzyme catalyses O-phospho-L-serine + 2-oxoglutarate = 3-phosphooxypyruvate + L-glutamate. The catalysed reaction is 4-(phosphooxy)-L-threonine + 2-oxoglutarate = (R)-3-hydroxy-2-oxo-4-phosphooxybutanoate + L-glutamate. The protein operates within amino-acid biosynthesis; L-serine biosynthesis; L-serine from 3-phospho-D-glycerate: step 2/3. Its pathway is cofactor biosynthesis; pyridoxine 5'-phosphate biosynthesis; pyridoxine 5'-phosphate from D-erythrose 4-phosphate: step 3/5. Functionally, catalyzes the reversible conversion of 3-phosphohydroxypyruvate to phosphoserine and of 3-hydroxy-2-oxo-4-phosphonooxybutanoate to phosphohydroxythreonine. This is Phosphoserine aminotransferase from Coxiella burnetii (strain Dugway 5J108-111).